Reading from the N-terminus, the 715-residue chain is Dynein axonemal intermediate chain 7 (715 aa).

The disordered stretch occupies residues alanine 291–valine 322. Over residues aspartate 295–glycine 318 the composition is skewed to basic and acidic residues.

This sequence belongs to the DNAI7 family. Part of the multisubunit axonemal dynein complex formed at least of two heavy chains and a number of intermediate and light chains. Associates with tubulin. Interacts with microtubule. Post-translationally, ubiquitinated. Ubiquitination leads to its degradation through the 26S proteasome. Ubiquitin-proteasome-mediated DNAI7 degradation occurs in mitosis.

It is found in the cell projection. The protein resides in the cilium. Its subcellular location is the cytoplasm. Its function is as follows. Via its association with the multisubunit axonemal dynein complex, is potentially involved in the regulation of cilia function. May act as a cell cycle regulator. The chain is Dynein axonemal intermediate chain 7 from Bos taurus (Bovine).